Reading from the N-terminus, the 356-residue chain is D-alanine--D-alanine ligase (356 aa).

An ATP-grasp domain is found at 134 to 339; the sequence is KQLFAHRGLP…YADLITKLIE (206 aa). Residue 167-222 participates in ATP binding; it reads KDKLEFPVFVKPANLGSSVGISKCNNEEELKSGIEEAFQFDRKLVIEQGIEAREIE. Mg(2+) contacts are provided by D293, E306, and N308.

This sequence belongs to the D-alanine--D-alanine ligase family. Mg(2+) is required as a cofactor. Requires Mn(2+) as cofactor.

It localises to the cytoplasm. The enzyme catalyses 2 D-alanine + ATP = D-alanyl-D-alanine + ADP + phosphate + H(+). Its pathway is cell wall biogenesis; peptidoglycan biosynthesis. Functionally, cell wall formation. The polypeptide is D-alanine--D-alanine ligase (Staphylococcus carnosus (strain TM300)).